We begin with the raw amino-acid sequence, 489 residues long: Betaine aldehyde dehydrogenase (489 aa).

Residues T26 and D93 each contribute to the K(+) site. Position 150–152 (G150–W152) interacts with NAD(+). The active-site Charge relay system is the K162. K176–E179 contributes to the NAD(+) binding site. K(+) is bound at residue V180. G229 to T232 contributes to the NAD(+) binding site. L245 lines the K(+) pocket. The Proton acceptor role is filled by E251. 3 residues coordinate NAD(+): G253, C285, and E386. Residue C285 is the Nucleophile of the active site. C285 bears the Cysteine sulfenic acid (-SOH) mark. Residues K456 and G459 each coordinate K(+). E463 acts as the Charge relay system in catalysis.

It belongs to the aldehyde dehydrogenase family. Dimer of dimers. It depends on K(+) as a cofactor.

It catalyses the reaction betaine aldehyde + NAD(+) + H2O = glycine betaine + NADH + 2 H(+). It participates in amine and polyamine biosynthesis; betaine biosynthesis via choline pathway; betaine from betaine aldehyde: step 1/1. Functionally, involved in the biosynthesis of the osmoprotectant glycine betaine. Catalyzes the irreversible oxidation of betaine aldehyde to the corresponding acid. The polypeptide is Betaine aldehyde dehydrogenase (Burkholderia orbicola (strain MC0-3)).